Reading from the N-terminus, the 222-residue chain is DNA ADP-ribosyl transferase (222 aa).

The 198-residue stretch at 12 to 209 (TLIYHITHLN…PVRVRRSWYY (198 aa)) folds into the DarT domain. NAD(+) is bound by residues 16-18 (HIT), G25, and L33. Residues 38 to 56 (RPPTQQNVAYGHIQAHRAQ) are NAD(+)-binding element. A DNA-binding region spans residues 47-53 (YGHIQAH). R54 contacts NAD(+). The active-site Proton acceptor is the R54. 3 DNA-binding regions span residues 78–83 (RSPMLY), 148–151 (SYWA), and 154–158 (REKKQ). Residues 119–160 (TDRHAAVQYVCFFHKLEHLKALDWQAIQASYWANVREKKQAE) are ADP-ribosylating turn-turn loop. The active site involves E160.

It belongs to the DarT ADP-ribosyltransferase family. In terms of assembly, interacts with cognate antitoxin DarG (via C-terminus); this heterodimeric complex neutralizes the toxic effect of DarT by preventing ssDNA binding to DarT and consequently inactivating the toxin by direct protein-protein interactions.

The catalysed reaction is a thymidine in DNA + NAD(+) = an N-(ADP-alpha-D-ribosyl)-thymidine in DNA + nicotinamide + H(+). Its function is as follows. Toxic component of the hybrid type II/IV toxin-antitoxin (TA) system DarTG, which plays a crucial role in controlling bacterial growth and bacteriophage infection. Its toxic effect is neutralized by cognate antitoxin DarG. In case of phage infection, DarT toxin ADP-ribosylates DNA, which inhibits both viral DNA and RNA synthesis and leads to abortive infection. ADP-ribosylates ssDNA on the second thymidine of the consensus sequence 5'-TNTC-3'; the protein does not auto-modify. Has no activity on dsDNA in vitro. This leads to a decrease in DNA replication. Upon expression in E.coli inhibits cell growth, colony formation and induces the SOS response. Expression leads to bacteriostasis; however if cells grow over an hour in the presence of toxin, growth is no longer restored on antitoxin-inducing plates. In E.coli ADP-ribosylates genomic DNA (gDNA), which induces RecA expression (a marker for DNA damage). In Thermus aquaticus (strain ATCC BAA-2747 / Y51MC23), this protein is DNA ADP-ribosyl transferase.